Consider the following 255-residue polypeptide: NAD kinase (255 aa).

The active-site Proton acceptor is the Asp-44. Residues 44 to 45 (DG), His-49, 114 to 115 (NE), Asp-144, Ala-152, 155 to 160 (SAYNLS), and Gln-216 contribute to the NAD(+) site.

This sequence belongs to the NAD kinase family. The cofactor is a divalent metal cation.

It localises to the cytoplasm. The catalysed reaction is NAD(+) + ATP = ADP + NADP(+) + H(+). Its function is as follows. Involved in the regulation of the intracellular balance of NAD and NADP, and is a key enzyme in the biosynthesis of NADP. Catalyzes specifically the phosphorylation on 2'-hydroxyl of the adenosine moiety of NAD to yield NADP. This chain is NAD kinase, found in Rickettsia felis (strain ATCC VR-1525 / URRWXCal2) (Rickettsia azadi).